The primary structure comprises 215 residues: Cytochrome b6 (215 aa).

The chain crosses the membrane as a helical span at residues 32-52 (IFYCLGGITLTCFLVQVATGF). Heme c is bound at residue cysteine 35. Histidine 86 and histidine 100 together coordinate heme b. The next 3 helical transmembrane spans lie at 90–110 (ASMMVLMMILHVFRVYLTGGF), 116–136 (LTWVTGVVLAVLTASFGVTGY), and 186–206 (LHTFVLPLLTAVFMLMHFLMI). Residues histidine 187 and histidine 202 each contribute to the heme b site.

This sequence belongs to the cytochrome b family. PetB subfamily. In terms of assembly, the 4 large subunits of the cytochrome b6-f complex are cytochrome b6, subunit IV (17 kDa polypeptide, PetD), cytochrome f and the Rieske protein, while the 4 small subunits are PetG, PetL, PetM and PetN. The complex functions as a dimer. Heme b is required as a cofactor. The cofactor is heme c.

The protein resides in the plastid. It is found in the chloroplast thylakoid membrane. In terms of biological role, component of the cytochrome b6-f complex, which mediates electron transfer between photosystem II (PSII) and photosystem I (PSI), cyclic electron flow around PSI, and state transitions. The sequence is that of Cytochrome b6 from Oenothera elata subsp. hookeri (Hooker's evening primrose).